Here is a 316-residue protein sequence, read N- to C-terminus: Protein C4 (316 aa).

This sequence belongs to the poxviridae OPG031 protein family.

Its subcellular location is the host cytoplasm. It localises to the host nucleus. In terms of biological role, plays a role in the inhibition of host NF-kappa-B activation. Mechanistically, blocks the subunit p65/RELA translocation into the host nucleus. The protein is Protein C4 (OPG031) of Vaccinia virus (strain Western Reserve) (VACV).